Reading from the N-terminus, the 306-residue chain is Ornithine carbamoyltransferase (306 aa).

Carbamoyl phosphate is bound by residues 51–54, Gln78, Arg102, and 129–132; these read STRT and HPVQ. Residues Asn159, Asp223, and 227-228 each bind L-ornithine; that span reads SM. Carbamoyl phosphate is bound by residues 263–264 and Arg291; that span reads CL.

Belongs to the aspartate/ornithine carbamoyltransferase superfamily. OTCase family.

It localises to the cytoplasm. It carries out the reaction carbamoyl phosphate + L-ornithine = L-citrulline + phosphate + H(+). Its pathway is amino-acid biosynthesis; L-arginine biosynthesis; L-arginine from L-ornithine and carbamoyl phosphate: step 1/3. Reversibly catalyzes the transfer of the carbamoyl group from carbamoyl phosphate (CP) to the N(epsilon) atom of ornithine (ORN) to produce L-citrulline. This chain is Ornithine carbamoyltransferase, found in Sulfurovum sp. (strain NBC37-1).